We begin with the raw amino-acid sequence, 215 residues long: ATP phosphoribosyltransferase (215 aa).

The protein belongs to the ATP phosphoribosyltransferase family. Short subfamily. As to quaternary structure, heteromultimer composed of HisG and HisZ subunits.

The protein localises to the cytoplasm. The enzyme catalyses 1-(5-phospho-beta-D-ribosyl)-ATP + diphosphate = 5-phospho-alpha-D-ribose 1-diphosphate + ATP. It functions in the pathway amino-acid biosynthesis; L-histidine biosynthesis; L-histidine from 5-phospho-alpha-D-ribose 1-diphosphate: step 1/9. Functionally, catalyzes the condensation of ATP and 5-phosphoribose 1-diphosphate to form N'-(5'-phosphoribosyl)-ATP (PR-ATP). Has a crucial role in the pathway because the rate of histidine biosynthesis seems to be controlled primarily by regulation of HisG enzymatic activity. The chain is ATP phosphoribosyltransferase from Gloeothece citriformis (strain PCC 7424) (Cyanothece sp. (strain PCC 7424)).